Here is a 726-residue protein sequence, read N- to C-terminus: Catalase-peroxidase (726 aa).

Residues 1 to 13 are compositionally biased toward polar residues; that stretch reads MSMSEETNNSLSS. The disordered stretch occupies residues 1-34; sequence MSMSEETNNSLSSGKCPFHHGGSDQSAGEGTGSR. A cross-link (tryptophyl-tyrosyl-methioninium (Trp-Tyr) (with M-252)) is located at residues 105–226; it reads WHGAGTYRSV…LAATEMGLIY (122 aa). The active-site Proton acceptor is His106. A cross-link (tryptophyl-tyrosyl-methioninium (Tyr-Met) (with W-105)) is located at residues 226–252; it reads YVNPEGPNASGEPLSAAAAIRATFGNM. His267 serves as a coordination point for heme b.

This sequence belongs to the peroxidase family. Peroxidase/catalase subfamily. Homodimer or homotetramer. It depends on heme b as a cofactor. Formation of the three residue Trp-Tyr-Met cross-link is important for the catalase, but not the peroxidase activity of the enzyme.

The enzyme catalyses H2O2 + AH2 = A + 2 H2O. The catalysed reaction is 2 H2O2 = O2 + 2 H2O. Functionally, bifunctional enzyme with both catalase and broad-spectrum peroxidase activity. The protein is Catalase-peroxidase of Enterobacter sp. (strain 638).